Consider the following 470-residue polypeptide: ATP synthase subunit beta (470 aa).

157–164 (GGAGVGKT) is an ATP binding site.

It belongs to the ATPase alpha/beta chains family. F-type ATPases have 2 components, CF(1) - the catalytic core - and CF(0) - the membrane proton channel. CF(1) has five subunits: alpha(3), beta(3), gamma(1), delta(1), epsilon(1). CF(0) has three main subunits: a(1), b(2) and c(9-12). The alpha and beta chains form an alternating ring which encloses part of the gamma chain. CF(1) is attached to CF(0) by a central stalk formed by the gamma and epsilon chains, while a peripheral stalk is formed by the delta and b chains.

It localises to the cell membrane. The catalysed reaction is ATP + H2O + 4 H(+)(in) = ADP + phosphate + 5 H(+)(out). Functionally, produces ATP from ADP in the presence of a proton gradient across the membrane. The catalytic sites are hosted primarily by the beta subunits. The sequence is that of ATP synthase subunit beta from Pelotomaculum thermopropionicum (strain DSM 13744 / JCM 10971 / SI).